Consider the following 252-residue polypeptide: Triosephosphate isomerase (252 aa).

Residue 9-11 (NWK) coordinates substrate. The active-site Electrophile is the histidine 96. The active-site Proton acceptor is glutamate 166. Residues glycine 172, serine 212, and 233–234 (GG) contribute to the substrate site.

It belongs to the triosephosphate isomerase family. In terms of assembly, homodimer.

The protein localises to the cytoplasm. The enzyme catalyses D-glyceraldehyde 3-phosphate = dihydroxyacetone phosphate. It functions in the pathway carbohydrate biosynthesis; gluconeogenesis. The protein operates within carbohydrate degradation; glycolysis; D-glyceraldehyde 3-phosphate from glycerone phosphate: step 1/1. Functionally, involved in the gluconeogenesis. Catalyzes stereospecifically the conversion of dihydroxyacetone phosphate (DHAP) to D-glyceraldehyde-3-phosphate (G3P). In Prosthecochloris aestuarii (strain DSM 271 / SK 413), this protein is Triosephosphate isomerase.